Here is a 118-residue protein sequence, read N- to C-terminus: Putative membrane protein insertion efficiency factor (118 aa).

The protein belongs to the UPF0161 family.

Its subcellular location is the cell inner membrane. Its function is as follows. Could be involved in insertion of integral membrane proteins into the membrane. The polypeptide is Putative membrane protein insertion efficiency factor (Helicobacter pylori (strain P12)).